The sequence spans 337 residues: UDP-3-O-acylglucosamine N-acyltransferase 2 (337 aa).

The active-site Proton acceptor is the histidine 238.

The protein belongs to the transferase hexapeptide repeat family. LpxD subfamily. As to quaternary structure, homotrimer.

It carries out the reaction a UDP-3-O-[(3R)-3-hydroxyacyl]-alpha-D-glucosamine + a (3R)-hydroxyacyl-[ACP] = a UDP-2-N,3-O-bis[(3R)-3-hydroxyacyl]-alpha-D-glucosamine + holo-[ACP] + H(+). The protein operates within bacterial outer membrane biogenesis; LPS lipid A biosynthesis. In terms of biological role, catalyzes the N-acylation of UDP-3-O-acylglucosamine using 3-hydroxyacyl-ACP as the acyl donor. Is involved in the biosynthesis of lipid A, a phosphorylated glycolipid that anchors the lipopolysaccharide to the outer membrane of the cell. The protein is UDP-3-O-acylglucosamine N-acyltransferase 2 of Francisella tularensis subsp. tularensis (strain FSC 198).